Reading from the N-terminus, the 126-residue chain is UPF0102 protein HD_0802 (126 aa).

It belongs to the UPF0102 family.

The chain is UPF0102 protein HD_0802 from Haemophilus ducreyi (strain 35000HP / ATCC 700724).